We begin with the raw amino-acid sequence, 966 residues long: RNA polymerase-associated protein RapA (966 aa).

Positions 163-337 constitute a Helicase ATP-binding domain; the sequence is EVGRRIAPRV…FARLHLLDPN (175 aa). 176 to 183 contacts ATP; that stretch reads DEVGLGKT. The DEAH box signature appears at 283–286; that stretch reads DEAH. The Helicase C-terminal domain maps to 489–643; sequence RVDWLINLVK…TCPMGAILHE (155 aa).

The protein belongs to the SNF2/RAD54 helicase family. RapA subfamily. Interacts with the RNAP. Has a higher affinity for the core RNAP than for the holoenzyme. Its ATPase activity is stimulated by binding to RNAP.

In terms of biological role, transcription regulator that activates transcription by stimulating RNA polymerase (RNAP) recycling in case of stress conditions such as supercoiled DNA or high salt concentrations. Probably acts by releasing the RNAP, when it is trapped or immobilized on tightly supercoiled DNA. Does not activate transcription on linear DNA. Probably not involved in DNA repair. The sequence is that of RNA polymerase-associated protein RapA from Histophilus somni (strain 129Pt) (Haemophilus somnus).